A 328-amino-acid polypeptide reads, in one-letter code: BURP domain-containing protein 11 (328 aa).

One can recognise a BURP domain in the interval 74-318 (FFFRDALRPG…TKLSIVWVPR (245 aa)).

In terms of tissue distribution, expressed in roots.

In Oryza sativa subsp. japonica (Rice), this protein is BURP domain-containing protein 11 (BURP11).